A 349-amino-acid chain; its full sequence is MQILLNKTLKPYNSFSVNESADLIIQADSIQDLIDIWSDKKYTDMTKLPLGRGSNTLFCNHFNGVVVLNRLFGKSVTETDTDYLLKISSGEDWPALVEWCVDNGFAGIENLAMIPGCAGSAPIQNIGAYGLELKDICESVEYLDLETLQIKTLKNSECLFGYRESIFKHELKDRCIITAITLRLNKQWQPVLAYGPLSDLRNSKTTPKNVFDKICEIRSKKLPDPNVIGNAGSFFKNPVISEEHYLALCETYPNLPAYDVTEGKKIAAGWLIDNAGLKGFKINGAQVHQEQALVLINTGTATSEDILELANHVKNSVLDMYDIELEHEVRFYLNGEESFLSELFDERTH.

An FAD-binding PCMH-type domain is found at 17–187 (VNESADLIIQ…TAITLRLNKQ (171 aa)). Residue Arg-163 is part of the active site. The active-site Proton donor is Ser-233. The active site involves Glu-328.

The protein belongs to the MurB family. FAD serves as cofactor.

The protein resides in the cytoplasm. The enzyme catalyses UDP-N-acetyl-alpha-D-muramate + NADP(+) = UDP-N-acetyl-3-O-(1-carboxyvinyl)-alpha-D-glucosamine + NADPH + H(+). The protein operates within cell wall biogenesis; peptidoglycan biosynthesis. Functionally, cell wall formation. The protein is UDP-N-acetylenolpyruvoylglucosamine reductase of Aliivibrio fischeri (strain ATCC 700601 / ES114) (Vibrio fischeri).